A 381-amino-acid chain; its full sequence is NF-kappa-B inhibitor-like protein 1 (381 aa).

Residues 1-34 are disordered; that stretch reads MSNPSPQVPEEEASTSVCRPKSSMASTSRRQRRE. ANK repeat units lie at residues 64-93 and 97-130; these read GQPP…DPAH and HGDT…AMGI. Disordered stretches follow at residues 129-167 and 186-294; these read GIKN…EWRQ and GDAS…RGSL. A Phosphoserine modification is found at S150. Positions 150 to 159 are enriched in acidic residues; it reads SAEEEEEDDA. Basic and acidic residues-rich tracts occupy residues 218–228 and 238–287; these read REAEGSRRPPR and QQEE…EHPR.

Interacts with CACTIN (via N-terminal domain); the interaction occurs in a proinflammatory-independent manner. As to expression, detected in different cell types including monocytes, T-cells, B-cells and hepatocytes.

Its subcellular location is the nucleus. Functionally, involved in the regulation of innate immune response. Acts as negative regulator of Toll-like receptor and interferon-regulatory factor (IRF) signaling pathways. Contributes to the negative regulation of transcriptional activation of NF-kappa-B target genes in response to endogenous proinflammatory stimuli. This Homo sapiens (Human) protein is NF-kappa-B inhibitor-like protein 1 (NFKBIL1).